We begin with the raw amino-acid sequence, 486 residues long: Palmitoleoyl-protein carboxylesterase notum2 (486 aa).

The N-terminal stretch at 1–18 (MRILEIFAILLILKEVRP) is a signal peptide. The N-linked (GlcNAc...) asparagine glycan is linked to Asn183. Active-site charge relay system residues include Ser223, Asp331, and His380.

This sequence belongs to the pectinacetylesterase family. Notum subfamily.

The protein resides in the secreted. The catalysed reaction is [Wnt protein]-O-(9Z)-hexadecenoyl-L-serine + H2O = [Wnt protein]-L-serine + (9Z)-hexadecenoate + H(+). Its function is as follows. Carboxylesterase that acts as a key negative regulator of the Wnt signaling pathway by specifically mediating depalmitoleoylation of WNT proteins. Serine palmitoleoylation of WNT proteins is required for efficient binding to frizzled receptors. The polypeptide is Palmitoleoyl-protein carboxylesterase notum2 (Xenopus laevis (African clawed frog)).